We begin with the raw amino-acid sequence, 302 residues long: Enolase-phosphatase E1 (302 aa).

Over residues 1–10 the composition is skewed to basic residues; sequence MSDSRLRRRQ. The disordered stretch occupies residues 1–25; the sequence is MSDSRLRRRQGTAGTDNKRRADGPH. Basic and acidic residues predominate over residues 16–25; the sequence is DNKRRADGPH. Mg(2+)-binding residues include Asp40 and Glu42. Residues 183–184 and Lys217 each bind substrate; that span reads SS. Asp242 contributes to the Mg(2+) binding site.

Belongs to the HAD-like hydrolase superfamily. MasA/MtnC family. As to quaternary structure, monomer. Mg(2+) is required as a cofactor.

It localises to the cytoplasm. It is found in the nucleus. The enzyme catalyses 5-methylsulfanyl-2,3-dioxopentyl phosphate + H2O = 1,2-dihydroxy-5-(methylsulfanyl)pent-1-en-3-one + phosphate. It functions in the pathway amino-acid biosynthesis; L-methionine biosynthesis via salvage pathway; L-methionine from S-methyl-5-thio-alpha-D-ribose 1-phosphate: step 3/6. Its pathway is amino-acid biosynthesis; L-methionine biosynthesis via salvage pathway; L-methionine from S-methyl-5-thio-alpha-D-ribose 1-phosphate: step 4/6. Functionally, bifunctional enzyme that catalyzes the enolization of 2,3-diketo-5-methylthiopentyl-1-phosphate (DK-MTP-1-P) into the intermediate 2-hydroxy-3-keto-5-methylthiopentenyl-1-phosphate (HK-MTPenyl-1-P), which is then dephosphorylated to form the acireductone 1,2-dihydroxy-3-keto-5-methylthiopentene (DHK-MTPene). In Branchiostoma floridae (Florida lancelet), this protein is Enolase-phosphatase E1.